Here is a 350-residue protein sequence, read N- to C-terminus: Putative ankyrin repeat protein RBE_0589 (350 aa).

ANK repeat units follow at residues 81–110 (DGFT…NPNI), 114–151 (DIVT…EPTD), and 153–182 (SGWT…NLDI).

This chain is Putative ankyrin repeat protein RBE_0589, found in Rickettsia bellii (strain RML369-C).